The sequence spans 182 residues: Thioredoxin F-type, chloroplastic (182 aa).

A chloroplast-targeting transit peptide spans 1 to 69 (MALNLCTSPK…SVRSSLETAG (69 aa)). Residues 70–181 (PTVTVGKVTE…LVAAIDTVRS (112 aa)) enclose the Thioredoxin domain. Residues cysteine 106 and cysteine 109 each act as nucleophile in the active site. A disulfide bond links cysteine 106 and cysteine 109.

It belongs to the thioredoxin family. Plant F-type subfamily. As to quaternary structure, forms a complex with heterodimeric ferredoxin-thioredoxin reductase (FTR) and ferredoxin.

The protein localises to the plastid. The protein resides in the chloroplast. In terms of biological role, participates in various redox reactions through the reversible oxidation of the active center dithiol to a disulfide. The F form is known to activate a number of enzymes of the photosynthetic carbon cycle. In Pisum sativum (Garden pea), this protein is Thioredoxin F-type, chloroplastic.